The chain runs to 613 residues: Spastin (613 aa).

Residues 1-42 (MNSPGGRGKKKGSAGSSSAPPAAGASPSAPSGPAPPAPPAGA) form a disordered region. Residues 1 to 61 (MNSPGGRGKK…KRNLYYFSYP (61 aa)) lie on the Cytoplasmic side of the membrane. The span at 13–29 (SAGSSSAPPAAGASPSA) shows a compositional bias: low complexity. Residues 30-39 (PSGPAPPAPP) are compositionally biased toward pro residues. Residues 62 to 82 (LFAAFALLRFVAFQLGLLVAW) constitute an intramembrane region (helical). At 83-613 (LCERLSRGAL…WNKDFGDTTV (531 aa)) the chain is on the cytoplasmic side. In terms of domain architecture, MIT spans 117–192 (HKRAFECISM…AMAKDRLQLL (76 aa)). The interval 224-312 (SESGAVPKKK…PAARKKKDTK (89 aa)) is disordered. 3 stretches are compositionally biased toward polar residues: residues 237 to 257 (THTS…STGL), 264 to 274 (PSYSGISTASV), and 281 to 299 (PATS…NKPS). 379–386 (GPPGNGKT) contacts ATP.

It belongs to the AAA ATPase family. Spastin subfamily. As to quaternary structure, homohexamer. The homohexamer is stabilized by ATP-binding. The homohexamer may adopt a ring conformation through which microtubules pass prior to being severed. Interacts with microtubules.

Its subcellular location is the membrane. The protein localises to the cytoplasm. It localises to the cytoskeleton. The protein resides in the microtubule organizing center. It is found in the centrosome. Its subcellular location is the perinuclear region. The protein localises to the nucleus. The enzyme catalyses n ATP + n H2O + a microtubule = n ADP + n phosphate + (n+1) alpha/beta tubulin heterodimers.. In terms of biological role, ATP-dependent microtubule severing protein that specifically recognizes and cuts microtubules that are polyglutamylated. Preferentially recognizes and acts on microtubules decorated with short polyglutamate tails: severing activity increases as the number of glutamates per tubulin rises from one to eight, but decreases beyond this glutamylation threshold. Microtubule severing promotes reorganization of cellular microtubule arrays and the release of microtubules from the centrosome following nucleation. Required for membrane traffic from the endoplasmic reticulum (ER) to the Golgi and for completion of the abscission stage of cytokinesis. Also plays a role in axon growth and the formation of axonal branches. The protein is Spastin of Gallus gallus (Chicken).